The chain runs to 601 residues: Glutamine--tRNA ligase (601 aa).

Residues 76–86 (PEPNGYLHIGH) carry the 'HIGH' region motif. Residues 77–79 (EPN) and 83–89 (HIGHAKS) contribute to the ATP site. Residues aspartate 109 and tyrosine 253 each contribute to the L-glutamine site. Residues threonine 272, 301-302 (RL), and 309-311 (MSK) each bind ATP. Positions 308–312 (VMSKR) match the 'KMSKS' region motif.

The protein belongs to the class-I aminoacyl-tRNA synthetase family. In terms of assembly, monomer.

It localises to the cytoplasm. It carries out the reaction tRNA(Gln) + L-glutamine + ATP = L-glutaminyl-tRNA(Gln) + AMP + diphosphate. In Rhodopirellula baltica (strain DSM 10527 / NCIMB 13988 / SH1), this protein is Glutamine--tRNA ligase.